The chain runs to 253 residues: Cholesterol ring-cleaving hydrolase IpdB subunit (253 aa).

Belongs to the 3-oxoacid CoA-transferase subunit B family. Heterotetramer composed of 2 IpdA subunits and 2 IpdB subunits.

The enzyme catalyses (3E)-2-(2-carboxylatoethyl)-3-methyl-6-oxocyclohex-1-ene-1-carboxyl-CoA + H2O = 6-methyl-3,7-dioxodecanedioyl-CoA. It participates in steroid metabolism; cholesterol degradation. Its function is as follows. Involved in the final steps of cholesterol and steroid degradation. Opens the last steroid ring of cholesterol by catalyzing the hydrolysis of (3E)-2-(2-carboxylatoethyl)-3-methyl-6-oxocyclohex-1-ene-1-carboxyl-CoA (COCHEA-CoA) to 6-methyl-3,7-dioxodecanedioyl-CoA (MeDODA-CoA). The chain is Cholesterol ring-cleaving hydrolase IpdB subunit from Rhodococcus jostii (strain RHA1).